We begin with the raw amino-acid sequence, 322 residues long: Sideroflexin fsf1 (322 aa).

Helical transmembrane passes span 143–163 (SYIYAVSASCGVAIGLNKIVP), 175–195 (VLGRLTPFAAVASAGVLNVFL), 229–249 (TALSRVINASPIMVIPPLVLM), and 269–289 (LGLITLTSLIALPLAIGVFPA).

Belongs to the sideroflexin family.

The protein localises to the mitochondrion membrane. Its function is as follows. Mitochondrial amino-acid transporter that mediates transport of serine into mitochondria. This chain is Sideroflexin fsf1, found in Schizosaccharomyces pombe (strain 972 / ATCC 24843) (Fission yeast).